A 103-amino-acid chain; its full sequence is MVKSLHCLIGIVLFLAILNAGNGFTLDRSASIERQEDSWPKISLFHGNQRKNDLKKSVSPTWNKLSRCPVYLPTKSDTIRVVQIKGYFAEKKQTIITSYCIIK.

An N-terminal signal peptide occupies residues methionine 1–glycine 23.

The protein belongs to the scoloptoxin-24 family. Contains 1 disulfide bond. In terms of tissue distribution, expressed by the venom gland.

The protein localises to the secreted. The sequence is that of U-scoloptoxin(24)-Er1a from Ethmostigmus rubripes (Giant centipede).